The sequence spans 360 residues: D-xylose 1-dehydrogenase [NADP(+)] (360 aa).

It belongs to the Gfo/Idh/MocA family. Homotretramer.

It carries out the reaction D-xylofuranose + NADP(+) = D-xylono-1,4-lactone + NADPH + H(+). Its function is as follows. NADP-dependent D-xylose dehydrogenase involved in the degradation of D-xylose, a major component of hemicelluloses such as xylan. In addition to D-xylose, oxidizes D-ribose at similar kinetic constants, whereas D-glucose is oxidized with about 70-fold lower catalytic efficiency. This chain is D-xylose 1-dehydrogenase [NADP(+)] (gfo6), found in Haloarcula marismortui (strain ATCC 43049 / DSM 3752 / JCM 8966 / VKM B-1809) (Halobacterium marismortui).